A 317-amino-acid chain; its full sequence is MNLPDTESPAAIFLMGPTASGKSGLAIEIARHFPVEVVSVDSAQVYRYMDIGSAKPDKSIQIEIPHHLINLINPDESYSAAQFREDALSVMHGITARGRIPLLVGGTMLYFKVLQQGLATLPAADEAVRKELEQSAREQGWPAMHTVLSRLDPVIAERIKPNDSQRIQRALEVCYLTGRPMSAVLKQQQSRDFPYRVFNIALLPGDRSVLHARISQRFDKMLEIGLVDEVRMIRDQFQVTADMPAMRCVGYRQVYMYLENEISLAEMRERGVFATRQLAKRQLTWLRAMNELHGFDCLANQLAQQIIGFIQKQRIFA.

Residue 16–23 (GPTASGKS) coordinates ATP. 18-23 (TASGKS) lines the substrate pocket. 3 interaction with substrate tRNA regions span residues 41–44 (DSAQ), 165–169 (QRIQR), and 247–252 (RCVGYR).

This sequence belongs to the IPP transferase family. As to quaternary structure, monomer. Mg(2+) is required as a cofactor.

The catalysed reaction is adenosine(37) in tRNA + dimethylallyl diphosphate = N(6)-dimethylallyladenosine(37) in tRNA + diphosphate. In terms of biological role, catalyzes the transfer of a dimethylallyl group onto the adenine at position 37 in tRNAs that read codons beginning with uridine, leading to the formation of N6-(dimethylallyl)adenosine (i(6)A). The sequence is that of tRNA dimethylallyltransferase from Nitrosomonas eutropha (strain DSM 101675 / C91 / Nm57).